A 219-amino-acid chain; its full sequence is Tegument protein UL14 (219 aa).

The interval 161–219 (ANGPSRIGSHPTYTPTPTGPPGAPAAPLSRTPPSPAPPTGPATDPASASGFARDYPDGE) is disordered. Residues 177–200 (PTGPPGAPAAPLSRTPPSPAPPTG) show a composition bias toward pro residues.

The protein belongs to the alphaherpesvirinae HHV-1 UL14 protein family. As to quaternary structure, interacts with UL51. Phosphorylated.

The protein resides in the virion tegument. It is found in the host cytoplasm. Its subcellular location is the host nucleus. Functionally, contributes to the nuclear transport of the viral transcriptional activator VP16 during the early phase of infection. Therefore, participates indirectly in the regulation of the immediate-early gene expression. Additionally, seems to be important for efficient nuclear targeting of capsids. The UL51-UL14 complex regulates final viral envelopment for efficient viral replication. In Human herpesvirus 1 (strain 17) (HHV-1), this protein is Tegument protein UL14.